Here is a 357-residue protein sequence, read N- to C-terminus: NADH-quinone oxidoreductase subunit H (357 aa).

Helical transmembrane passes span 22–42 (VAII…LMLV), 94–114 (IYLF…VWAV), 130–150 (LLYV…AGWA), 164–184 (AALL…VVMI), 199–219 (GGII…FFIS), 254–274 (FFLA…IMFF), 294–314 (IPGM…YLWV), and 333–353 (VFLP…QLQL).

This sequence belongs to the complex I subunit 1 family. NDH-1 is composed of 14 different subunits. Subunits NuoA, H, J, K, L, M, N constitute the membrane sector of the complex.

It localises to the cell inner membrane. It carries out the reaction a quinone + NADH + 5 H(+)(in) = a quinol + NAD(+) + 4 H(+)(out). In terms of biological role, NDH-1 shuttles electrons from NADH, via FMN and iron-sulfur (Fe-S) centers, to quinones in the respiratory chain. The immediate electron acceptor for the enzyme in this species is believed to be ubiquinone. Couples the redox reaction to proton translocation (for every two electrons transferred, four hydrogen ions are translocated across the cytoplasmic membrane), and thus conserves the redox energy in a proton gradient. This subunit may bind ubiquinone. The polypeptide is NADH-quinone oxidoreductase subunit H (Vesicomyosocius okutanii subsp. Calyptogena okutanii (strain HA)).